The chain runs to 318 residues: uncharacterized protein (318 aa).

The next 4 membrane-spanning stretches (helical) occupy residues 112–132 (VIGV…PVFL), 147–167 (IAIE…FLSM), 209–229 (CGSS…LLVP), and 237–257 (VIDR…VLQL).

Its subcellular location is the cell membrane. This is an uncharacterized protein from Bacillus subtilis (strain 168).